Consider the following 130-residue polypeptide: MSATQNYGTGRRKTATARVFLRPGTGNISINNRSLDNFFGRETARMVVRQPLELTETVEKFDIYVTVIGGGVSGQAGAIRHGITRALMQYDETLRGALRKAGFVTRDAREVERKKVGLRKARKRPQYSKR.

Belongs to the universal ribosomal protein uS9 family.

This is Small ribosomal subunit protein uS9 from Pseudomonas syringae pv. tomato (strain ATCC BAA-871 / DC3000).